A 38-amino-acid polypeptide reads, in one-letter code: Photosystem II reaction center protein L (38 aa).

The chain crosses the membrane as a helical span at residues 17-37; the sequence is SLYWGLLLIFVLAVLFSSYIF.

Belongs to the PsbL family. In terms of assembly, PSII is composed of 1 copy each of membrane proteins PsbA, PsbB, PsbC, PsbD, PsbE, PsbF, PsbH, PsbI, PsbJ, PsbK, PsbL, PsbM, PsbT, PsbX, PsbY, PsbZ, Psb30/Ycf12, at least 3 peripheral proteins of the oxygen-evolving complex and a large number of cofactors. It forms dimeric complexes.

Its subcellular location is the plastid. It localises to the chloroplast thylakoid membrane. Its function is as follows. One of the components of the core complex of photosystem II (PSII). PSII is a light-driven water:plastoquinone oxidoreductase that uses light energy to abstract electrons from H(2)O, generating O(2) and a proton gradient subsequently used for ATP formation. It consists of a core antenna complex that captures photons, and an electron transfer chain that converts photonic excitation into a charge separation. This subunit is found at the monomer-monomer interface and is required for correct PSII assembly and/or dimerization. The polypeptide is Photosystem II reaction center protein L (Ostreococcus tauri).